A 189-amino-acid polypeptide reads, in one-letter code: GTPase NRas (189 aa).

Residues 10–18 and 29–30 contribute to the GTP site; these read GAGGVGKSA and VD. The short motif at 32–40 is the Effector region element; sequence YDPTIEDSY. Position 57 to 61 (57 to 61) interacts with GTP; sequence DTAGQ. Serine 89 is modified (phosphoserine). 116-119 lines the GTP pocket; it reads NKCD. The hypervariable region stretch occupies residues 166–185; it reads YRMKKLNSSDDGTQGCMGLP. Residue lysine 170 forms a Glycyl lysine isopeptide (Lys-Gly) (interchain with G-Cter in ubiquitin) linkage. The S-palmitoyl cysteine moiety is linked to residue cysteine 181. Cysteine 186 carries the S-farnesyl cysteine lipid modification. A propeptide spans 187-189 (removed in mature form); sequence VVM.

Belongs to the small GTPase superfamily. Ras family. As to quaternary structure, interacts (active GTP-bound form preferentially) with RGS14. Interacts (active GTP-bound form) with RASSF7. Interacts (active GTP-bound form) with both SHOC2 and PP1c (all isoforms) to form a tertiary complex; SHOC2 and PP1c preferably bind M-Ras/MRAS, but they also bind K-Ras/KRAS, N-Ras/NRAS and H-Ras/HRAS. Palmitoylated by the ZDHHC9-GOLGA7 complex. Depalmitoylated by ABHD17A, ABHD17B and ABHD17C. A continuous cycle of de- and re-palmitoylation regulates rapid exchange between plasma membrane and Golgi. In terms of processing, acetylation at Lys-104 prevents interaction with guanine nucleotide exchange factors (GEFs). Post-translationally, ubiquitinated by the BCR(LZTR1) E3 ubiquitin ligase complex at Lys-170 in a non-degradative manner, leading to inhibit Ras signaling by decreasing Ras association with membranes. Phosphorylation at Ser-89 enhances NRAS association with its downstream effectors.

The protein localises to the cell membrane. Its subcellular location is the golgi apparatus membrane. It catalyses the reaction GTP + H2O = GDP + phosphate + H(+). With respect to regulation, alternates between an inactive form bound to GDP and an active form bound to GTP. Activated by a guanine nucleotide-exchange factor (GEF) and inactivated by a GTPase-activating protein (GAP). Its function is as follows. Ras proteins bind GDP/GTP and possess intrinsic GTPase activity. The protein is GTPase NRas (NRAS) of Pongo abelii (Sumatran orangutan).